The sequence spans 308 residues: Ribosomal RNA small subunit methyltransferase H (308 aa).

Residues 33 to 35, D51, F82, D96, and Q103 contribute to the S-adenosyl-L-methionine site; that span reads GGY.

It belongs to the methyltransferase superfamily. RsmH family.

Its subcellular location is the cytoplasm. It carries out the reaction cytidine(1402) in 16S rRNA + S-adenosyl-L-methionine = N(4)-methylcytidine(1402) in 16S rRNA + S-adenosyl-L-homocysteine + H(+). Specifically methylates the N4 position of cytidine in position 1402 (C1402) of 16S rRNA. The protein is Ribosomal RNA small subunit methyltransferase H of Rickettsia canadensis (strain McKiel).